Reading from the N-terminus, the 156-residue chain is Protein-export protein SecB (156 aa).

It belongs to the SecB family. Homotetramer, a dimer of dimers. One homotetramer interacts with 1 SecA dimer.

It is found in the cytoplasm. One of the proteins required for the normal export of preproteins out of the cell cytoplasm. It is a molecular chaperone that binds to a subset of precursor proteins, maintaining them in a translocation-competent state. It also specifically binds to its receptor SecA. This chain is Protein-export protein SecB, found in Yersinia enterocolitica serotype O:8 / biotype 1B (strain NCTC 13174 / 8081).